Here is a 328-residue protein sequence, read N- to C-terminus: Malate dehydrogenase (328 aa).

12–18 (GAAGQIG) is an NAD(+) binding site. Residues arginine 95 and arginine 101 each coordinate substrate. NAD(+) is bound by residues asparagine 108, glutamine 115, and 132–134 (VGN). Residues asparagine 134 and arginine 165 each coordinate substrate. The active-site Proton acceptor is the histidine 190.

The protein belongs to the LDH/MDH superfamily. MDH type 2 family.

The catalysed reaction is (S)-malate + NAD(+) = oxaloacetate + NADH + H(+). Catalyzes the reversible oxidation of malate to oxaloacetate. The chain is Malate dehydrogenase from Methylibium petroleiphilum (strain ATCC BAA-1232 / LMG 22953 / PM1).